The chain runs to 510 residues: Mitochondrial metal transporter 1 (510 aa).

Positions 120–141 (ADKPSSLNLHSHTHSHGHTHSH) are disordered. The segment covering 130–141 (SHTHSHGHTHSH) has biased composition (basic residues). The next 6 helical transmembrane spans lie at 165–185 (WVGL…GIVF), 194–214 (AIHA…VGLA), 241–261 (LAMA…GPVI), 286–306 (VTDI…EWIF), 333–353 (LTSL…IQSL), and 356–376 (IGGL…MCIA).

Belongs to the cation diffusion facilitator (CDF) transporter (TC 2.A.4) family. SLC30A subfamily.

It localises to the mitochondrion membrane. Mitochondrial metal transporter involved in mitochondrial iron accumulation. The protein is Mitochondrial metal transporter 1 (MMT1) of Saccharomyces cerevisiae (strain ATCC 204508 / S288c) (Baker's yeast).